Consider the following 252-residue polypeptide: T-box transcription factor mls-1 (252 aa).

Residues 40 to 210 (LWRRFHNLGT…SNPFAKGFRE (171 aa)) constitute a DNA-binding region (T-box).

May interact with unc-37.

It localises to the nucleus. Functionally, probable transcription factor required for the cell fate specification of non-striated uterine muscle precursor cells. Furthermore, may function with the transcriptional corepressor unc-37. This is T-box transcription factor mls-1 from Caenorhabditis elegans.